Reading from the N-terminus, the 154-residue chain is MIRRLHRVKVLRVERAEKAIKTQQACLQAAHRRHQEAVQTSQDYHLWRIDEEQRLFDQRKNTTLNCKDLEKWQRQIASLREKEANYELECAKLLERLANERERLTLCQKMLQQARHKENKFLELVRREDEDELNQQHYQEEQEQEEFLQHHRNA.

The disordered stretch occupies residues 132 to 154 (ELNQQHYQEEQEQEEFLQHHRNA).

The protein belongs to the SpaM family.

Functionally, component of the yop secretion machinery. The polypeptide is Yop proteins translocation protein O (yscO) (Yersinia pseudotuberculosis serotype I (strain IP32953)).